Reading from the N-terminus, the 441-residue chain is Ribosomal protein uS12 methylthiotransferase RimO (441 aa).

The MTTase N-terminal domain occupies 6-116; it reads PKVGFVSLGC…VMTAVHANLP (111 aa). 6 residues coordinate [4Fe-4S] cluster: cysteine 15, cysteine 51, cysteine 80, cysteine 147, cysteine 151, and cysteine 154. The Radical SAM core domain occupies 133 to 370; the sequence is LTPQHYAYLK…MEVQESISAE (238 aa). One can recognise a TRAM domain in the interval 373 to 439; the sequence is RRKIGRIETV…GHDLWAAPPA (67 aa).

It belongs to the methylthiotransferase family. RimO subfamily. Requires [4Fe-4S] cluster as cofactor.

The protein localises to the cytoplasm. It carries out the reaction L-aspartate(89)-[ribosomal protein uS12]-hydrogen + (sulfur carrier)-SH + AH2 + 2 S-adenosyl-L-methionine = 3-methylsulfanyl-L-aspartate(89)-[ribosomal protein uS12]-hydrogen + (sulfur carrier)-H + 5'-deoxyadenosine + L-methionine + A + S-adenosyl-L-homocysteine + 2 H(+). Its function is as follows. Catalyzes the methylthiolation of an aspartic acid residue of ribosomal protein uS12. This chain is Ribosomal protein uS12 methylthiotransferase RimO, found in Methylobacillus flagellatus (strain ATCC 51484 / DSM 6875 / VKM B-1610 / KT).